Consider the following 439-residue polypeptide: GTPase Der (439 aa).

EngA-type G domains lie at 4-168 (PIVA…KDDE) and 177-352 (INIA…DNYT). GTP is bound by residues 10–17 (GRPNVGKS), 57–61 (DTGGI), 120–123 (NKID), 183–190 (GKPNVGKS), 230–234 (DTAGL), and 295–298 (NKWD). Positions 353 to 437 (KRVKTGVLND…GIKTEFRERK (85 aa)) constitute a KH-like domain.

This sequence belongs to the TRAFAC class TrmE-Era-EngA-EngB-Septin-like GTPase superfamily. EngA (Der) GTPase family. As to quaternary structure, associates with the 50S ribosomal subunit.

In terms of biological role, GTPase that plays an essential role in the late steps of ribosome biogenesis. The polypeptide is GTPase Der (Clostridium botulinum (strain Loch Maree / Type A3)).